A 529-amino-acid chain; its full sequence is Kunitz-type protease inhibitor 1 (529 aa).

The signal sequence occupies residues 1–35; sequence MAPARTMARARLAPAGIPAVALWLLCTLGLQGTQA. The MANSC domain occupies 57-140; it reads GVPGFVLDTN…FAPREGFINY (84 aa). Asn66 and Asn235 each carry an N-linked (GlcNAc...) asparagine glycan. One can recognise a BPTI/Kunitz inhibitor 1 domain in the interval 250 to 300; it reads CLASNKVGRCRGSFPRWYYDPTEQICKSFVYGGCLGNKNNYLREEECILAC. 9 disulfide bridges follow: Cys250/Cys300, Cys259/Cys283, Cys275/Cys296, Cys335/Cys347, Cys342/Cys360, Cys354/Cys369, Cys391/Cys441, Cys400/Cys424, and Cys416/Cys437. An LDL-receptor class A domain is found at 334-370; sequence TCQPTQFRCSNGCCIDSFLECDDTPNCPDASDEAACE. Residues 391–441 enclose the BPTI/Kunitz inhibitor 2 domain; that stretch reads CVDLPDTGLCKESIPRWYYNPFSEHCARFTYGGCYGNKNNFEEEQQCLESC. A glycan (N-linked (GlcNAc...) asparagine) is linked at Asn523.

Interacts with HGFAC. Interacts with TMPRSS13; the interaction promotes the phosphorylation and cell membrane localization of TMPRSS13.

It localises to the secreted. Its subcellular location is the cytoplasm. The protein resides in the cell membrane. Its function is as follows. Inhibitor of HGFAC. Inhibits serine protease activity of ST14/matriptase in vitro. Inhibits serine protease activity of TMPRSS13, via the BPTI/Kunitz inhibitor 1 domain. The polypeptide is Kunitz-type protease inhibitor 1 (SPINT1) (Homo sapiens (Human)).